Reading from the N-terminus, the 111-residue chain is Ribonuclease P protein component 1 (111 aa).

The protein belongs to the eukaryotic/archaeal RNase P protein component 1 family. In terms of assembly, consists of a catalytic RNA component and at least 4-5 protein subunits.

It localises to the cytoplasm. The catalysed reaction is Endonucleolytic cleavage of RNA, removing 5'-extranucleotides from tRNA precursor.. Functionally, part of ribonuclease P, a protein complex that generates mature tRNA molecules by cleaving their 5'-ends. The chain is Ribonuclease P protein component 1 from Hyperthermus butylicus (strain DSM 5456 / JCM 9403 / PLM1-5).